Consider the following 911-residue polypeptide: Band 3 anion transport protein (911 aa).

M1 carries the N-acetylmethionine modification. Residues 1–26 (MEELQDDYEDMMEENLEQEEYEDPDI) show a composition bias toward acidic residues. The disordered stretch occupies residues 1-40 (MEELQDDYEDMMEENLEQEEYEDPDIPESQMEEPAAHDTE). Topologically, residues 1 to 403 (MEELQDDYED…LSDITDAFSP (403 aa)) are cytoplasmic. Residues Y8, Y21, and Y46 each carry the phosphotyrosine modification. Residues 13 to 31 (EENLEQEEYEDPDIPESQM) are (Microbial infection) Interaction with P.falciparum (isolate K1) FBPA. Positions 55 to 290 (HKVYVELQEL…LGRAAATLMS (236 aa)) are globular. Positions 176–185 (AVLTRSGDPS) are interaction with ANK1. Residues S185 and S350 each carry the phosphoserine modification. The dimerization arm stretch occupies residues 304 to 357 (RGELLHSLEGFLDCSLVLPPTDAPSEQALLSLVPVQRELLRRRYQSSPAKPDSS). Position 359 is a phosphotyrosine (Y359). A helical transmembrane segment spans residues 404–427 (QVLAAVIFIYFAALSPAITFGGLL). Residues 428 to 435 (GEKTRNQM) are Extracellular-facing. A helical transmembrane segment spans residues 436 to 456 (GVSELLISTAVQGILFALLGA). At 457–459 (QPL) the chain is on the cytoplasmic side. The discontinuously helical transmembrane segment at 460–476 (LVVGFSGPLLVFEEAFF) threads the bilayer. Residues 477–485 (SFCETNGLE) lie on the Extracellular side of the membrane. A helical membrane pass occupies residues 486–506 (YIVGRVWIGFWLILLVVLVVA). Residues 507 to 518 (FEGSFLVRFISR) lie on the Cytoplasmic side of the membrane. The helical transmembrane segment at 519 to 541 (YTQEIFSFLISLIFIYETFSKLI) threads the bilayer. At 542–570 (KIFQDHPLQKTYNYNVLMVPKPQGPLPNT) the chain is on the extracellular side. The tract at residues 559–630 (MVPKPQGPLP…DFFIQDTYTQ (72 aa)) is involved in anion transport. Residues 571–591 (ALLSLVLMAGTFFFAMMLRKF) traverse the membrane as a helical segment. The Cytoplasmic segment spans residues 592–602 (KNSSYFPGKLR). A helical membrane pass occupies residues 603–623 (RVIGDFGVPISILIMVLVDFF). Topologically, residues 624–663 (IQDTYTQKLSVPDGFKVSNSSARGWVIHPLGLRSEFPIWM) are extracellular. A glycan (N-linked (GlcNAc...) (complex) asparagine) is linked at N642. Residues 664 to 684 (MFASALPALLVFILIFLESQI) form a helical membrane-spanning segment. Residues 685 to 700 (TTLIVSKPERKMVKGS) are Cytoplasmic-facing. Residues 701–719 (GFHLDLLLVVGMGGVAALF) form a helical membrane-spanning segment. A discontinuously helical membrane pass occupies residues 720–737 (GMPWLSATTVRSVTHANA). The segment at 720-761 (GMPWLSATTVRSVTHANALTVMGKASTPGAAAQIQEVKEQRI) is (Microbial infection) 5ABC region; interaction with P.falciparum (isolate 3D7) MSP9. Residues 738–760 (LTVMGKASTPGAAAQIQEVKEQR) lie on the Cytoplasmic side of the membrane. Helical transmembrane passes span 761–781 (ISGL…PILS) and 782–800 (RIPL…VTSL). At 801 to 838 (SGIQLFDRILLLFKPPKYHPDVPYVKRVKTWRMHLFTG) the chain is on the cytoplasmic side. The segment at residues 839-869 (IQIICLAVLWVVKSTPASLALPFVLILTVPL) is an intramembrane region (discontinuously helical). Residue C843 is the site of S-palmitoyl cysteine attachment. Residues 870–911 (RRVLLPLIFRNVELQCLDADDAKATFDEEEGRDEYDEVAMPV) lie on the Cytoplasmic side of the membrane. Y904 is modified (phosphotyrosine).

Belongs to the anion exchanger (TC 2.A.31) family. A dimer in solution, but in its membrane environment, it exists primarily as a mixture of dimers and tetramers and spans the membrane asymmetrically. Component of the ankyrin-1 complex in the erythrocyte, composed of ANK1, RHCE, RHAG, SLC4A1, EPB42, GYPA, GYPB and AQP1. Interacts with STOM; this interaction positively regulates SLC4A1 activity. Interacts with GYPA; a GYPA monomer is bound at each end of the SLC4A1 dimer forming a heterotetramer. Three SLC4A1 dimers (Band 3-I, Band 3-II and Band 3-III) participates in the ankyrin-1 complex. Interacts (via the cytoplasmic domain) with EPB42; this interaction is mediated by the SLC4A1 Band 3-I dimer. Interacts (via the cytoplasmic domain) directly with ANK1; this interaction is mediated by the SLC4A1 Band 3-II and Band 3-III dimers. As to quaternary structure, interacts with TMEM139. In terms of assembly, (Microbial infection) Interacts (via N-terminus) with P.falciparum (isolate K1) aldolase FBPA; the interaction inhibits FBPA catalytic activity. (Microbial infection) Interacts (via the 5ABC region) with P.falciparum (isolate 3D7) MSP9/ABRA (via N-terminus). As to quaternary structure, (Microbial infection) Interacts (via the 5ABC region) with P.falciparum (isolate 3D7) MSP1 p42 subunit. Post-translationally, phosphorylated on Tyr-8 and Tyr-21 most likely by SYK. PP1-resistant phosphorylation that precedes Tyr-359 and Tyr-904 phosphorylation. Phosphorylated on Tyr-359 and Tyr-904 most likely by LYN. PP1-inhibited phosphorylation that follows Tyr-8 and Tyr-21 phosphorylation. In terms of processing, N-glycosylated. As to expression, detected in erythrocytes (at protein level). In terms of tissue distribution, expressed in kidney (at protein level).

Its subcellular location is the cell membrane. It localises to the basolateral cell membrane. It catalyses the reaction hydrogencarbonate(in) + chloride(out) = hydrogencarbonate(out) + chloride(in). With respect to regulation, phenyl isothiocyanate inhibits anion transport in vitro. Its function is as follows. Functions both as a transporter that mediates electroneutral anion exchange across the cell membrane and as a structural protein. Component of the ankyrin-1 complex of the erythrocyte membrane; required for normal flexibility and stability of the erythrocyte membrane and for normal erythrocyte shape via the interactions of its cytoplasmic domain with cytoskeletal proteins, glycolytic enzymes, and hemoglobin. Functions as a transporter that mediates the 1:1 exchange of inorganic anions across the erythrocyte membrane. Mediates chloride-bicarbonate exchange in the kidney, and is required for normal acidification of the urine. (Microbial infection) Acts as a receptor for P.falciparum (isolate 3D7) MSP9 and thus, facilitates merozoite invasion of erythrocytes. Acts as a receptor for P.falciparum (isolate 3D7) MSP1 and thus, facilitates merozoite invasion of erythrocytes. The protein is Band 3 anion transport protein of Homo sapiens (Human).